The chain runs to 439 residues: Beta-conglycinin beta subunit 1 (439 aa).

The N-terminal stretch at 1 to 23 (MMRVRFPLLVLLGTVFLASVCVS) is a signal peptide. Cupin type-1 domains follow at residues 34–193 (FYLR…EEIN) and 240–401 (FNLR…QDVE). N351 is a glycosylation site (N-linked (GlcNAc...) asparagine). A disordered region spans residues 411–439 (YFVDAQPQQKEEGSKGRKGPFPSILGALY). The segment at 430–439 (PFPSILGALY) is necessary for sorting to protein storage vacuole.

It belongs to the 7S seed storage protein family. The alpha-, alpha'-, and beta-subunits associate in various combinations to form trimeric proteins. Post-translationally, the N-linked glycans are not essential for the folding and assembly into trimers. As to expression, expressed in seeds. Not detected in cotyledons or in mature plants.

The protein localises to the vacuole. Its subcellular location is the aleurone grain. It is found in the endoplasmic reticulum. The protein resides in the protein storage vacuole. In terms of biological role, seed storage protein. Accumulates during seed development and is hydrolyzed after germination to provide a carbon and nitrogen source for the developing seedling. In Glycine max (Soybean), this protein is Beta-conglycinin beta subunit 1.